The sequence spans 557 residues: Dihydroxy-acid dehydratase (557 aa).

A [2Fe-2S] cluster-binding site is contributed by Cys-49. Asp-81 serves as a coordination point for Mg(2+). Cys-122 provides a ligand contact to [2Fe-2S] cluster. Mg(2+) contacts are provided by Asp-123 and Lys-124. Lys-124 is subject to N6-carboxylysine. Cys-194 contacts [2Fe-2S] cluster. Glu-446 contacts Mg(2+). Ser-472 serves as the catalytic Proton acceptor.

The protein belongs to the IlvD/Edd family. Homodimer. It depends on [2Fe-2S] cluster as a cofactor. Mg(2+) serves as cofactor.

The catalysed reaction is (2R)-2,3-dihydroxy-3-methylbutanoate = 3-methyl-2-oxobutanoate + H2O. It catalyses the reaction (2R,3R)-2,3-dihydroxy-3-methylpentanoate = (S)-3-methyl-2-oxopentanoate + H2O. It participates in amino-acid biosynthesis; L-isoleucine biosynthesis; L-isoleucine from 2-oxobutanoate: step 3/4. Its pathway is amino-acid biosynthesis; L-valine biosynthesis; L-valine from pyruvate: step 3/4. In terms of biological role, functions in the biosynthesis of branched-chain amino acids. Catalyzes the dehydration of (2R,3R)-2,3-dihydroxy-3-methylpentanoate (2,3-dihydroxy-3-methylvalerate) into 2-oxo-3-methylpentanoate (2-oxo-3-methylvalerate) and of (2R)-2,3-dihydroxy-3-methylbutanoate (2,3-dihydroxyisovalerate) into 2-oxo-3-methylbutanoate (2-oxoisovalerate), the penultimate precursor to L-isoleucine and L-valine, respectively. The polypeptide is Dihydroxy-acid dehydratase (Prochlorococcus marinus (strain MIT 9312)).